A 264-amino-acid polypeptide reads, in one-letter code: Phosphate import ATP-binding protein PstB (264 aa).

The region spanning 11 to 250 is the ABC transporter domain; sequence LKAEALSVYY…DTTEKIFDSP (240 aa). 43-50 provides a ligand contact to ATP; sequence GPSGCGKS.

This sequence belongs to the ABC transporter superfamily. Phosphate importer (TC 3.A.1.7) family. In terms of assembly, the complex is composed of two ATP-binding proteins (PstB), two transmembrane proteins (PstC and PstA) and a solute-binding protein (PstS).

It localises to the cell inner membrane. The enzyme catalyses phosphate(out) + ATP + H2O = ADP + 2 phosphate(in) + H(+). Its function is as follows. Part of the ABC transporter complex PstSACB involved in phosphate import. Responsible for energy coupling to the transport system. The protein is Phosphate import ATP-binding protein PstB of Synechococcus elongatus (strain ATCC 33912 / PCC 7942 / FACHB-805) (Anacystis nidulans R2).